Here is a 364-residue protein sequence, read N- to C-terminus: RNA polymerase sigma factor SigA (364 aa).

The tract at residues 132–202 is sigma-70 factor domain-2; sequence LAEANLRLVV…TRAIADQART (71 aa). The short motif at 156–159 is the Interaction with polymerase core subunit RpoC element; sequence DLIQ. The segment at 211-287 is sigma-70 factor domain-3; it reads ETINKLIRVQ…DDVIESPVDY (77 aa). A sigma-70 factor domain-4 region spans residues 300-353; sequence VMDTLTDREENVLRMRFGLDDGRMHTLEDVGKQFKVTRERIRQIEAKAIKKLRH. Positions 326–345 form a DNA-binding region, H-T-H motif; sequence LEDVGKQFKVTRERIRQIEA.

This sequence belongs to the sigma-70 factor family. RpoD/SigA subfamily. As to quaternary structure, interacts transiently with the RNA polymerase catalytic core.

It localises to the cytoplasm. In terms of biological role, sigma factors are initiation factors that promote the attachment of RNA polymerase to specific initiation sites and are then released. This sigma factor is the primary sigma factor during exponential growth. This chain is RNA polymerase sigma factor SigA, found in Lactococcus lactis subsp. cremoris (Streptococcus cremoris).